The chain runs to 538 residues: Probable bifunctional tRNA threonylcarbamoyladenosine biosynthesis protein (538 aa).

The interval 1–327 (MIVLICLGIE…FRTDEVEAPW (327 aa)) is kae1. Fe cation-binding residues include H111, H115, and Y132. L-threonylcarbamoyladenylate-binding positions include 132–136 (YVSGG), D164, G177, E181, and N260. D288 contacts Fe cation. The region spanning 336-538 (KLPDNLIAKG…EIESRGRYTH (203 aa)) is the Protein kinase domain. ATP-binding positions include 342 to 350 (IAKGAESDI) and K363. Catalysis depends on D452, which acts as the Proton acceptor; for kinase activity.

The protein in the N-terminal section; belongs to the KAE1 / TsaD family. It in the C-terminal section; belongs to the protein kinase superfamily. Tyr protein kinase family. BUD32 subfamily. Component of the KEOPS complex that consists of Kae1, Bud32, Cgi121 and Pcc1; the whole complex dimerizes. The cofactor is Fe(2+).

The protein resides in the cytoplasm. It catalyses the reaction L-seryl-[protein] + ATP = O-phospho-L-seryl-[protein] + ADP + H(+). The catalysed reaction is L-threonyl-[protein] + ATP = O-phospho-L-threonyl-[protein] + ADP + H(+). The enzyme catalyses L-threonylcarbamoyladenylate + adenosine(37) in tRNA = N(6)-L-threonylcarbamoyladenosine(37) in tRNA + AMP + H(+). Functionally, required for the formation of a threonylcarbamoyl group on adenosine at position 37 (t(6)A37) in tRNAs that read codons beginning with adenine. Is a component of the KEOPS complex that is probably involved in the transfer of the threonylcarbamoyl moiety of threonylcarbamoyl-AMP (TC-AMP) to the N6 group of A37. The Kae1 domain likely plays a direct catalytic role in this reaction. The Bud32 domain probably displays kinase activity that regulates Kae1 function. This Methanobrevibacter smithii (strain ATCC 35061 / DSM 861 / OCM 144 / PS) protein is Probable bifunctional tRNA threonylcarbamoyladenosine biosynthesis protein.